The following is a 6919-amino-acid chain: Nonribosomal peptide synthetase easA (6919 aa).

The Carrier 1 domain maps to 17–93; sequence TNNEVVEKDI…ELCQSVKLAE (77 aa). Position 54 is an O-(pantetheine 4'-phosphoryl)serine (Ser-54). An epimerization 1 region spans residues 123-427; sequence EAQKLYASTK…FLRKVKDTRM (305 aa). The disordered stretch occupies residues 294–319; the sequence is FRRSTPVESTNDERNTNERQHNRHQN. Basic and acidic residues predominate over residues 304 to 319; sequence NDERNTNERQHNRHQN. A condensation 1 region spans residues 604–981; it reads LNVELDCGRL…ISTTQEINQL (378 aa). The adenylation 1 stretch occupies residues 1003–1394; the sequence is QRLRRPDAWA…GRRDTQIKVR (392 aa). The Carrier 2 domain occupies 1531 to 1608; sequence EPETLLERQV…QLAQTAEVKD (78 aa). The residue at position 1569 (Ser-1569) is an O-(pantetheine 4'-phosphoryl)serine. Positions 1617-2031 are epimerization 2; it reads LLSPMQKWYF…ANAISALGTE (415 aa). The segment at 2072-2509 is condensation 2; the sequence is VEDIYPCSPI…VGQLNTVTPK (438 aa). The interval 2541 to 2930 is adenylation 2; sequence RPNATAVCAW…ARKDSQVKVR (390 aa). A Carrier 3 domain is found at 3067 to 3143; sequence APSTFMEKKL…EMAAHLEAQM (77 aa). The residue at position 3104 (Ser-3104) is an O-(pantetheine 4'-phosphoryl)serine. The condensation 3 stretch occupies residues 3188-3599; that stretch reads EDVYPCTPLQ…LLSKDEARRL (412 aa). An adenylation 3 region spans residues 3620 to 4018; sequence QHVSTNPYAP…GRRDGQVKIR (399 aa). The Carrier 4 domain occupies 4151–4228; that stretch reads TPSTSEEKNI…QLAKKAVIKT (78 aa). Ser-4188 bears the O-(pantetheine 4'-phosphoryl)serine mark. The condensation 4 stretch occupies residues 4282 to 4708; the sequence is ESIYYCSPIQ…EIDVIPTGDV (427 aa). The tract at residues 4732–5133 is adenylation 4; it reads EQALSQPGAQ…GRADGQIKIR (402 aa). The 78-residue stretch at 5260-5337 folds into the Carrier 5 domain; that stretch reads ALSTETERRL…DMANTIANSE (78 aa). At Ser-5296 the chain carries O-(pantetheine 4'-phosphoryl)serine. Residues 5380 to 5775 form a condensation 5 region; the sequence is EDAYPCTPLQ…VFGQLQSAAN (396 aa). The interval 5824-6216 is adenylation 5; that stretch reads SCPDAQAVHA…IGRRDTQVKI (393 aa). The Carrier 6 domain maps to 6344–6421; sequence EPATVTERLL…DMATLIDRKT (78 aa). An O-(pantetheine 4'-phosphoryl)serine modification is found at Ser-6381.

It functions in the pathway antibiotic biosynthesis. Nonribosomal peptide synthetase; part of the gene cluster that mediates the biosynthesis of emericellamides, secondary metabolites acting as antibiotics. The biosynthesis of emericellamides initiates from the highly reducing polyketide synthase easB which catalyzes the formation of the linear polyketide chain. EasB produces several polyketides that can be further processed by the downstream enzymes. The polyketides are released from easB as linear polyketide carboxylic acids, which are converted to CoA thioesters by the acyl-CoA ligase easD. The substrates are then loaded onto the acyltransferase easC, which shuttles them to the first thiolation (T) domain of the nonribosomal peptide synthetase easA. EasA then performs condensation of the polyketides with one glycine, two alanine, one valine and one leucine residues. A last step of cyclization leads to the production of emericellamides. The sequence is that of Nonribosomal peptide synthetase easA from Emericella nidulans (strain FGSC A4 / ATCC 38163 / CBS 112.46 / NRRL 194 / M139) (Aspergillus nidulans).